The following is a 225-amino-acid chain: Pathogenesis-related 5 protein Jun a 3.0101 (225 aa).

The signal sequence occupies residues 1–26 (MARVSELAFLLAATLAISLHMQEAGV). Disulfide bonds link C35–C224, C76–C86, C91–C97, C139–C213, C144–C197, C152–C162, C166–C175, and C176–C184. IgE-binding stretches follow at residues 146–157 (ADINAVCPSELK), 158–170 (VDGG…NVFK), and 178–191 (NAYV…NYSK).

It belongs to the thaumatin family. As to expression, expressed in pollen (at protein level).

The chain is Pathogenesis-related 5 protein Jun a 3.0101 from Juniperus ashei (Ozark white cedar).